Here is a 319-residue protein sequence, read N- to C-terminus: MIGMILTAIISTTLIMALLVAAGVFTWVERRLLAFVQERLGPNRVGPFGFLQWVADTVKIIAKEDEIPPGADRVAYRLAPAVAATPVLAGFGVVAFGENLALAEIDVGVMFLLGMMGLTAYAVVLGALASPSRFSLIGGLRAAAQMLAYEAFLGLSMLGVVMIAGSLSMSEIVRAQENVWFIVLQPIGAALFTLGGIAAAHRTPFDLPESENDLVGGYITEYTGMSFGLFFLGEYLAILLVSAFAVTLFFGGWLGPWLPGPIWFGLKTGVIAAMFVWIRAALPRPRYDQMVTMAWKVALPLALANVLITGFIVVARSAP.

9 helical membrane-spanning segments follow: residues 5 to 25 (ILTA…AGVF), 78 to 98 (LAPA…AFGE), 109 to 129 (VMFL…GALA), 147 to 167 (LAYE…AGSL), 179 to 199 (VWFI…GIAA), 214 to 234 (LVGG…FLGE), 238 to 258 (ILLV…GPWL), 262 to 282 (IWFG…RAAL), and 294 to 314 (AWKV…FIVV).

It belongs to the complex I subunit 1 family. In terms of assembly, NDH-1 is composed of 14 different subunits. Subunits NuoA, H, J, K, L, M, N constitute the membrane sector of the complex.

It is found in the cell inner membrane. It catalyses the reaction a quinone + NADH + 5 H(+)(in) = a quinol + NAD(+) + 4 H(+)(out). In terms of biological role, NDH-1 shuttles electrons from NADH, via FMN and iron-sulfur (Fe-S) centers, to quinones in the respiratory chain. The immediate electron acceptor for the enzyme in this species is believed to be ubiquinone. Couples the redox reaction to proton translocation (for every two electrons transferred, four hydrogen ions are translocated across the cytoplasmic membrane), and thus conserves the redox energy in a proton gradient. This subunit may bind ubiquinone. The chain is NADH-quinone oxidoreductase subunit H 1 from Rhodopseudomonas palustris (strain BisA53).